The following is a 418-amino-acid chain: MFRRLLIATVVGILAAFAVAGFRHAMLLLEWLFLNNDSGSLVNAATNLSPWRRLLTPALGGLAAGLLLMGWQKFTQQRPHAPTDYMEALQTDGQFDYAASLVKSLASLLVVTSGSAIGREGAMILLAALAASCFAQRFTPRQEWKLWIACGAAAGMAAAYRAPLAGSLFIAEVLFGTMMLASLGPVIISAVVALLVSNLINHSDALLYNVQLSVTVQARDYALIISTGVLAGLCGPLLLTLMNACHRGFVSLKLAPPWQLALGGVIVGLLSLFTPAVWGNGYSTVQSFLTAPPLLMIIAGIFLCKLCAVLASSGSGAPGGVFTPTLFIGLAIGMLYGRSLGLWFPDGEEITLLLGLTEMATLLAATTHAPIMSTLMICEMTGEYQLLPGLLIACVIASVISRTLHRDSIYRQHTAQHS.

10 consecutive transmembrane segments (helical) span residues 5-25 (LLIA…FRHA), 54-74 (LLTP…WQKF), 146-166 (LWIA…PLAG), 168-188 (LFIA…PVII), 222-242 (ALII…LTLM), 258-278 (WQLA…PAVW), 291-311 (APPL…AVLA), 316-336 (GAPG…GMLY), 352-372 (LLLG…APIM), and 380-400 (MTGE…ASVI).

It belongs to the chloride channel (TC 2.A.49) family. ClcB subfamily.

It is found in the cell inner membrane. Functionally, probably acts as an electrical shunt for an outwardly-directed proton pump that is linked to amino acid decarboxylation, as part of the extreme acid resistance (XAR) response. The polypeptide is Voltage-gated ClC-type chloride channel ClcB (Shigella boydii serotype 18 (strain CDC 3083-94 / BS512)).